The primary structure comprises 262 residues: Small ribosomal subunit protein eS4 (262 aa).

Residues 42-105 (LPLXVFLRNR…NEHFRLAYDV (64 aa)) enclose the S4 RNA-binding domain.

This sequence belongs to the eukaryotic ribosomal protein eS4 family.

In Candida albicans (Yeast), this protein is Small ribosomal subunit protein eS4 (RPS4).